A 72-amino-acid polypeptide reads, in one-letter code: Cell division protein ZapB (72 aa).

Residues 1-71 (MSLEILDQLE…IRSLLGKFDN (71 aa)) are a coiled coil.

Belongs to the ZapB family. In terms of assembly, homodimer. The ends of the coiled-coil dimer bind to each other, forming polymers. Interacts with FtsZ.

It is found in the cytoplasm. Non-essential, abundant cell division factor that is required for proper Z-ring formation. It is recruited early to the divisome by direct interaction with FtsZ, stimulating Z-ring assembly and thereby promoting cell division earlier in the cell cycle. Its recruitment to the Z-ring requires functional FtsA or ZipA. The protein is Cell division protein ZapB of Haemophilus influenzae (strain 86-028NP).